Consider the following 510-residue polypeptide: NADP-dependent fatty aldehyde dehydrogenase (510 aa).

Residue 229 to 234 participates in NADP(+) binding; the sequence is GSVGGG. Residues Glu253 and Cys289 contribute to the active site.

Belongs to the aldehyde dehydrogenase family. In terms of assembly, homodimer.

The catalysed reaction is an aldehyde + NADP(+) + H2O = a carboxylate + NADPH + 2 H(+). In terms of biological role, catalyzes the oxidation of long-chain aliphatic aldehydes to acids. May be implicated in controlling luminescence as it catalyzes the oxidation of the fatty aldehyde substrate for the light-emitting reaction. The chain is NADP-dependent fatty aldehyde dehydrogenase (aldH) from Vibrio harveyi (Beneckea harveyi).